A 107-amino-acid polypeptide reads, in one-letter code: Nucleoid-associated protein Lferr_1592 (107 aa).

This sequence belongs to the YbaB/EbfC family. In terms of assembly, homodimer.

The protein resides in the cytoplasm. Its subcellular location is the nucleoid. Its function is as follows. Binds to DNA and alters its conformation. May be involved in regulation of gene expression, nucleoid organization and DNA protection. The protein is Nucleoid-associated protein Lferr_1592 of Acidithiobacillus ferrooxidans (strain ATCC 53993 / BNL-5-31) (Leptospirillum ferrooxidans (ATCC 53993)).